The chain runs to 377 residues: Early estrogen-induced gene 1 protein (377 aa).

The C2 NT-type domain occupies 2–145; the sequence is AFLTKKKKFK…ILKVNIGMSL (144 aa). Composition is skewed to polar residues over residues 160 to 173, 188 to 198, and 222 to 234; these read KTVS…SLQM, VRQNRSRQAML, and SRNS…QSKI. The tract at residues 160-313 is disordered; that stretch reads KTVSPPGQDS…SVESQPTWVD (154 aa). Over residues 256–269 the composition is skewed to low complexity; that stretch reads TSTSSSVSGGLSLT. The span at 274-285 shows a compositional bias: basic and acidic residues; it reads EPERDVKPEKPP.

The protein belongs to the EEIG family.

It is found in the nucleus. Its subcellular location is the cytoplasm. In terms of biological role, may be involved in osteoclast differentiation. In Xenopus laevis (African clawed frog), this protein is Early estrogen-induced gene 1 protein (eeig1).